The following is a 218-amino-acid chain: Peroxynitrite isomerase 2 (218 aa).

The segment at 1–24 is disordered; that stretch reads MTPAGDTPERGSGDRAVAEAAERA. Basic and acidic residues predominate over residues 7–24; that stretch reads TPERGSGDRAVAEAAERA. The GXWXGXG motif lies at 65-71; it reads GVWRGEG. Heme b is bound by residues lysine 181 and histidine 208.

The protein belongs to the nitrobindin family. In terms of assembly, homodimer. Requires heme b as cofactor.

The catalysed reaction is peroxynitrite = nitrate. It functions in the pathway nitrogen metabolism. Functionally, heme-binding protein able to scavenge peroxynitrite and to protect free L-tyrosine against peroxynitrite-mediated nitration, by acting as a peroxynitrite isomerase that converts peroxynitrite to nitrate. Therefore, this protein likely plays a role in peroxynitrite sensing and in the detoxification of reactive nitrogen and oxygen species (RNS and ROS, respectively). Is able to bind nitric oxide (NO) in vitro, but may act as a sensor of peroxynitrite levels in vivo. The polypeptide is Peroxynitrite isomerase 2 (Mycolicibacterium smegmatis (strain ATCC 700084 / mc(2)155) (Mycobacterium smegmatis)).